Reading from the N-terminus, the 556-residue chain is mRNA-capping enzyme subunit beta (556 aa).

Disordered stretches follow at residues 1–28 (MKPS…DNNV) and 56–217 (LPPV…QKTS). Over residues 63 to 74 (VSTSDTGNTSHT) the composition is skewed to polar residues. The segment covering 85 to 96 (ESDETDTDDEPG) has biased composition (acidic residues). 2 stretches are compositionally biased toward basic and acidic residues: residues 103–131 (TKFR…KDKQ) and 139–212 (IQLD…KDIF).

Belongs to the fungal TPase family. Heterodimer. The mRNA-capping enzyme is composed of two separate chains alpha and beta, respectively a mRNA guanylyltransferase and an mRNA 5'-triphosphate monophosphatase. Mg(2+) serves as cofactor.

The protein localises to the nucleus. The catalysed reaction is a 5'-end triphospho-ribonucleoside in mRNA + H2O = a 5'-end diphospho-ribonucleoside in mRNA + phosphate + H(+). Functionally, first step of mRNA capping. Converts the 5'-triphosphate end of a nascent mRNA chain into a diphosphate end. The chain is mRNA-capping enzyme subunit beta (CET1) from Kluyveromyces lactis (strain ATCC 8585 / CBS 2359 / DSM 70799 / NBRC 1267 / NRRL Y-1140 / WM37) (Yeast).